Consider the following 88-residue polypeptide: Apolipoprotein C-I (88 aa).

The first 26 residues, 1 to 26 (MRLFISLPVLIVVLAMALEGPAPAQA), serve as a signal peptide directing secretion.

It belongs to the apolipoprotein C1 family.

The protein resides in the secreted. In terms of biological role, inhibitor of lipoprotein binding to the low density lipoprotein (LDL) receptor, LDL receptor-related protein, and very low density lipoprotein (VLDL) receptor. Associates with high density lipoproteins (HDL) and the triacylglycerol-rich lipoproteins in the plasma and makes up about 10% of the protein of the VLDL and 2% of that of HDL. Appears to interfere directly with fatty acid uptake and is also the major plasma inhibitor of cholesteryl ester transfer protein (CETP). Modulates the interaction of APOE with beta-migrating VLDL and inhibits binding of beta-VLDL to the LDL receptor-related protein. Binds free fatty acids and reduces their intracellular esterification. This is Apolipoprotein C-I (APOC1) from Myodes glareolus (Bank vole).